We begin with the raw amino-acid sequence, 527 residues long: uncharacterized protein (527 aa).

4 disordered regions span residues 1–49, 99–307, 319–353, and 382–419; these read MSSF…IKDE, DFNF…ATTT, TEINNNNSNSNNLPSIPIGNEKSKINDNQDEEDEN, and YINNDDGDDDDDDDENENENDSQPEEEYEENKQQQQQE. Residues 8–17 show a composition bias toward acidic residues; it reads YDDESEEEDN. 2 stretches are compositionally biased toward low complexity: residues 18–44 and 99–115; these read NNNNNNNNNNNNNNIINNNNNNNNSNN and DFNFYNNNNNSNSNSNN. Residues 141 to 150 show a composition bias toward basic and acidic residues; sequence NEFRNPDLKN. Low complexity-rich tracts occupy residues 167–178 and 186–222; these read SSQNTTTTQQSS and NNNNNNNNNNNNNNNNNNNNNNNNNNNNNNNNNNSNN. Positions 229 to 248 are enriched in basic and acidic residues; it reads DDKSKKINENENTVNKKDNI. Residues 283–296 show a composition bias toward basic residues; it reads LRKKLLKNQPKTKK. Composition is skewed to low complexity over residues 297 to 307 and 319 to 330; these read STTTTTTATTT and TEINNNNSNSNN. The segment covering 386–410 has biased composition (acidic residues); the sequence is DDGDDDDDDDENENENDSQPEEEYE.

This is an uncharacterized protein from Dictyostelium discoideum (Social amoeba).